A 605-amino-acid chain; its full sequence is Beta-hexosaminidase ARB_07893 (605 aa).

A signal peptide spans 1–18; sequence MLWIWVPGILGLFGRVEA. Asparagine 30 is a glycosylation site (N-linked (GlcNAc...) asparagine). Catalysis depends on glutamate 293, which acts as the Nucleophile. Asparagine 342 is a glycosylation site (N-linked (GlcNAc...) asparagine). The active-site Proton donor is the glutamate 374. An N-linked (GlcNAc...) asparagine glycan is attached at asparagine 449.

Belongs to the glycosyl hydrolase 20 family.

Its subcellular location is the secreted. The catalysed reaction is Hydrolysis of terminal non-reducing N-acetyl-D-hexosamine residues in N-acetyl-beta-D-hexosaminides.. Beta-hexosaminidase that shows a broad substrate specificity. In Arthroderma benhamiae (strain ATCC MYA-4681 / CBS 112371) (Trichophyton mentagrophytes), this protein is Beta-hexosaminidase ARB_07893.